The sequence spans 432 residues: MRVVILGSGVVGVASAWYLNQAGHEVTVIDREPGAALETSAANAGQISPGYAAPWAAPGVPLKAIKWMFQRHAPLAVRLDGTQFQLKWMWQMLRNCDTSHYMENKGRMVRLAEYSRDCLKALRAETNIQYEGRQGGTLQLFRTEQQYENATRDIAVLEDAGVPYQLLESSRLAEVEPALAEVAHKLTGGLQLPNDETGDCQLFTQNLARMAEQAGVKFRFNTPVDQLLCDGEQIYGVKCGDEVIKADAYVMAFGSYSTAMLKGIVDIPVYPLKGYSLTIPIAQEDGAPVSTILDETYKIAITRFDNRIRVGGMAEIVGFNTELLQPRRETLEMVVRDLYPRGGHVEQATFWTGLRPMTPDGTPVVGRTRFKNLWLNTGHGTLGWTMACGSGQLLSDLLSGRTPAIPYEDLSVARYSRGFTPLRPGHLHGAHS.

3 to 17 (VVILGSGVVGVASAW) lines the FAD pocket.

The protein belongs to the DadA oxidoreductase family. Requires FAD as cofactor.

The catalysed reaction is a D-alpha-amino acid + A + H2O = a 2-oxocarboxylate + AH2 + NH4(+). The protein operates within amino-acid degradation; D-alanine degradation; NH(3) and pyruvate from D-alanine: step 1/1. Functionally, oxidative deamination of D-amino acids. The protein is D-amino acid dehydrogenase of Escherichia coli O45:K1 (strain S88 / ExPEC).